Consider the following 165-residue polypeptide: Endoribonuclease YbeY (165 aa).

His-130, His-134, and His-140 together coordinate Zn(2+).

The protein belongs to the endoribonuclease YbeY family. Requires Zn(2+) as cofactor.

It localises to the cytoplasm. Functionally, single strand-specific metallo-endoribonuclease involved in late-stage 70S ribosome quality control and in maturation of the 3' terminus of the 16S rRNA. This chain is Endoribonuclease YbeY, found in Streptococcus sanguinis (strain SK36).